The chain runs to 648 residues: Replication restart protein PriA (648 aa).

The Helicase ATP-binding domain maps to 131–297 (TILNESNKPT…EIGKYQLVTL (167 aa)). 144–151 (GVTGSGKT) is an ATP binding site. The short motif at 240–243 (DEEH) is the DEAH box element. Zn(2+)-binding residues include Cys-358, Cys-361, Cys-367, Cys-370, Cys-385, Cys-388, Cys-398, and Cys-401. In terms of domain architecture, Helicase C-terminal spans 393–548 (KIFSSCPECL…SFFANELEIR (156 aa)).

This sequence belongs to the helicase family. PriA subfamily. Component of the replication restart primosome. Requires Zn(2+) as cofactor.

It carries out the reaction Couples ATP hydrolysis with the unwinding of duplex DNA by translocating in the 3'-5' direction.. The catalysed reaction is ATP + H2O = ADP + phosphate + H(+). Functionally, initiates the restart of stalled replication forks, which reloads the replicative helicase on sites other than the origin of replication. Recognizes and binds to abandoned replication forks and remodels them to uncover a helicase loading site. Promotes assembly of the primosome at these replication forks. This is Replication restart protein PriA from Rickettsia conorii (strain ATCC VR-613 / Malish 7).